Here is a 68-residue protein sequence, read N- to C-terminus: Large ribosomal subunit protein bL35 (68 aa).

This sequence belongs to the bacterial ribosomal protein bL35 family.

This Rickettsia akari (strain Hartford) protein is Large ribosomal subunit protein bL35.